Reading from the N-terminus, the 151-residue chain is MKLSKFLESQGTYVGIKLDEASKQELVRLQKTLRLKNPLDPDKFHVTVLYSRKQIDVPVVDTTFVATVEQVDCWKTQDGKHAVVAKMSCPALVERHEDLISIGGTHDYPDYTPHVTLSYDDVITPMFINTEVRLVDEYIEPLDLEWVANND.

Y13 serves as a coordination point for 3',3'-cGAMP. 3',3'-cUAMP is bound at residue Y13. Active-site residues include H45 and T47. Y108 lines the 3',3'-cGAMP pocket. Residue Y108 participates in 3',3'-cUAMP binding. Active-site residues include H114 and T116. Positions 140 and 146 each coordinate 3',3'-cGAMP. Residues E140 and W146 each contribute to the 3',3'-cUAMP site.

It belongs to the anti-CBASS protein Acb1 family.

The enzyme catalyses 3',3'-cUAMP + H2O = U[3'-5']pAp[3'] + H(+). It catalyses the reaction 3',3',3'-c-tri-AMP + H2O = A[3'-5']pA[3'-5']pAp[3'] + H(+). It carries out the reaction 3',3',3'-cAAG + H2O = G[3'-5']pA[3'-5']pAp[3'] + H(+). The catalysed reaction is 3',3',3'-cAAG + H2O = A[3'-5']pG[3'-5']pAp[3'] + H(+). The enzyme catalyses 3',3'-cGAMP + H2O = G[3'-5']pAp[3'] + H(+). Functionally, counteracts the host CBASS antiviral defense system. Phosphodiesterase that enables metal-independent hydrolysis of the host cyclic di- and trinucleotide CBASS signals such as 3'3'-cGAMP, 3'3'cUA, and 3'3'3'-cAAA. Does not cleave cGG or cA4. Besides evasion of the CBASS system, might also enable evasion of the type III CRISPR systems that use cA3 signals. The protein is Anti-CBASS protein Acb1 of Vibrio phage KVP40 (isolate Vibrio parahaemolyticus/Japan/Matsuzaki/1991) (KVP40).